A 207-amino-acid polypeptide reads, in one-letter code: Large ribosomal subunit protein bL25 (207 aa).

This sequence belongs to the bacterial ribosomal protein bL25 family. CTC subfamily. Part of the 50S ribosomal subunit; part of the 5S rRNA/L5/L18/L25 subcomplex. Contacts the 5S rRNA. Binds to the 5S rRNA independently of L5 and L18.

This is one of the proteins that binds to the 5S RNA in the ribosome where it forms part of the central protuberance. The polypeptide is Large ribosomal subunit protein bL25 (Bordetella petrii (strain ATCC BAA-461 / DSM 12804 / CCUG 43448)).